A 2832-amino-acid polypeptide reads, in one-letter code: Cyclic beta-(1,2)-glucan synthase NdvB (2832 aa).

7 consecutive transmembrane segments (helical) span residues 411–431 (FAIA…VYAF), 444–464 (IMLL…FNTV), 810–830 (LIPV…EPTP), 831–851 (ALIW…LSLI), 880–900 (QVAL…DAIV), 938–958 (WTAP…DTGL), and 959–979 (PFIG…AWFV). A Glycoamylase-like domain is found at 1299–1506 (LASEARLTSL…NGQLREWFHA (208 aa)).

Belongs to the NdvB family.

It localises to the cell inner membrane. The enzyme catalyses [(1-&gt;2)-beta-D-glucosyl](n) + UDP-alpha-D-glucose = [(1-&gt;2)-beta-D-glucosyl](n+1) + UDP + H(+). Functionally, involved in the biosynthesis of cyclic beta-(1,2)-glucan. It seems that NdvB is involved in three enzymatic activities. First, it may catalyze the transfer of the first glucose from UDP-Glc to an unknown amino acid. In the second enzymatic activity (UDP-Glc:beta-(1,2) oligosaccharide glucosyltransferase), it may be responsible for chain elongation. Finally, in the third activity, it may catalyze glucan cyclization and release from the protein. NdvB is also involved in nodule invasion and in bacteroid development. The protein is Cyclic beta-(1,2)-glucan synthase NdvB of Rhizobium meliloti (strain 1021) (Ensifer meliloti).